The chain runs to 137 residues: Large ribosomal subunit protein uL16 (137 aa).

Belongs to the universal ribosomal protein uL16 family. In terms of assembly, part of the 50S ribosomal subunit.

Functionally, binds 23S rRNA and is also seen to make contacts with the A and possibly P site tRNAs. This is Large ribosomal subunit protein uL16 from Chelativorans sp. (strain BNC1).